The chain runs to 638 residues: 9-cis-epoxycarotenoid dioxygenase NCED1, chloroplastic (638 aa).

A chloroplast-targeting transit peptide spans 1–80 (MQRICPAHCS…QTEQEDEQLV (80 aa)). Low complexity-rich tracts occupy residues 28–37 (AASAAPQSPS), 44–69 (ASAA…TRTP), and 92–102 (TTNGRAAPSQS). Disordered stretches follow at residues 28–80 (AASA…EQLV) and 92–113 (TTNG…PAAA). 4 residues coordinate Fe cation: histidine 331, histidine 380, histidine 446, and histidine 624.

This sequence belongs to the carotenoid oxygenase family. Fe(2+) serves as cofactor.

Its subcellular location is the plastid. It is found in the chloroplast. The catalysed reaction is a 9-cis-epoxycarotenoid + O2 = a 12'-apo-carotenal + 2-cis,4-trans-xanthoxin. It catalyses the reaction 9-cis-violaxanthin + O2 = (3S,5R,6S)-5,6-epoxy-3-hydroxy-5,6-dihydro-12'-apo-beta-caroten-12'-al + 2-cis,4-trans-xanthoxin. It carries out the reaction 9'-cis-neoxanthin + O2 = (3S,5R,6R)-3,5-dihydroxy-6,7-didehydro-5,6-dihydro-12'-apo-beta-caroten-12'-al + 2-cis,4-trans-xanthoxin. Functionally, has a 11,12(11',12') 9-cis epoxycarotenoid cleavage activity. Catalyzes the first step of abscisic-acid biosynthesis from carotenoids. This Oryza sativa subsp. japonica (Rice) protein is 9-cis-epoxycarotenoid dioxygenase NCED1, chloroplastic.